We begin with the raw amino-acid sequence, 351 residues long: Mitochondrial mRNA pseudouridine synthase RPUSD3 (351 aa).

Residues 1 to 25 (MRAVLAREMDGRRVLGRFWSGWRRG) constitute a mitochondrion transit peptide. The segment at 33–58 (EDAGFGTEARHQRQPRGSCQRSGPLG) is disordered. Phosphoserine is present on S71.

It belongs to the pseudouridine synthase RluA family. Forms a regulatory protein-RNA complex, consisting of RCC1L, NGRN, RPUSD3, RPUSD4, TRUB2, FASTKD2 and 16S mt-rRNA.

Its subcellular location is the mitochondrion matrix. It catalyses the reaction a uridine in mRNA = a pseudouridine in mRNA. Its function is as follows. Catalyzes uridine to pseudouridine isomerization (pseudouridylation) of specific mitochondrial mRNAs (mt-mRNAs), a post-transcriptional modification necessary for their translation. Acts at position 390 in COXI mt-mRNA and at position 697-699 in mitochondrial COXIII mt-mRNA. As a component of a functional protein-RNA module, consisting of RCC1L, NGRN, RPUSD3, RPUSD4, TRUB2, FASTKD2 and 16S mitochondrial ribosomal RNA (16S mt-rRNA), controls 16S mt-rRNA abundance and may play a role in mitochondrial ribosome biogenesis. The protein is Mitochondrial mRNA pseudouridine synthase RPUSD3 of Homo sapiens (Human).